The chain runs to 338 residues: Ketol-acid reductoisomerase (NADP(+)) (338 aa).

Residues 2–182 (TKMYYEKDTD…GGARAGVLET (181 aa)) form the KARI N-terminal Rossmann domain. Residues 25–28 (YGSQ), S51, S53, and 83–86 (DELQ) each bind NADP(+). H108 is an active-site residue. Residue G134 coordinates NADP(+). Positions 183–330 (TFRTETETDL…SEIRKLYCWN (148 aa)) constitute a KARI C-terminal knotted domain. Residues D191, E195, E227, and E231 each contribute to the Mg(2+) site. S252 contributes to the substrate binding site.

The protein belongs to the ketol-acid reductoisomerase family. Mg(2+) is required as a cofactor.

It catalyses the reaction (2R)-2,3-dihydroxy-3-methylbutanoate + NADP(+) = (2S)-2-acetolactate + NADPH + H(+). The catalysed reaction is (2R,3R)-2,3-dihydroxy-3-methylpentanoate + NADP(+) = (S)-2-ethyl-2-hydroxy-3-oxobutanoate + NADPH + H(+). It functions in the pathway amino-acid biosynthesis; L-isoleucine biosynthesis; L-isoleucine from 2-oxobutanoate: step 2/4. Its pathway is amino-acid biosynthesis; L-valine biosynthesis; L-valine from pyruvate: step 2/4. Involved in the biosynthesis of branched-chain amino acids (BCAA). Catalyzes an alkyl-migration followed by a ketol-acid reduction of (S)-2-acetolactate (S2AL) to yield (R)-2,3-dihydroxy-isovalerate. In the isomerase reaction, S2AL is rearranged via a Mg-dependent methyl migration to produce 3-hydroxy-3-methyl-2-ketobutyrate (HMKB). In the reductase reaction, this 2-ketoacid undergoes a metal-dependent reduction by NADPH to yield (R)-2,3-dihydroxy-isovalerate. This Clostridium botulinum (strain Alaska E43 / Type E3) protein is Ketol-acid reductoisomerase (NADP(+)).